We begin with the raw amino-acid sequence, 520 residues long: MSGKCDVVVVGGGISGMAAAKLLHDFGLNVVVLEARDRVGGRTYTIRNQKVKYLDLGGSYVGPTQNCILRLAKELGLETYKVNEVERLIHHVKGKSYPFRGPFPPVWNPIAYLDHNNLWRTMDDMGREIPSDAPWKAPLAEEWDHMTMKELLDKICWTESAKQLATLFVNLCVTAETHEVSALWFLWYVKQCGGTTRIISTTNGGQERKFVGGSGQVSERIMDLLGDQVKLERPVTHIDQTGENVLVETLNHEVYEAKYVISAIPPTLGMKIHFNPPLPMMRNQLITRVPLGSVIKCIVYYKEPFWRKKDYCGTMIIEGEEAPIAYTLDDTKPDGNYAAIMGFILAHKARKLARLTKDERMKKLCELYAKVLGSQEALQPVHYEEKNWCEEQYSGGCYTTYFPPGIMTQYGRVLRQPVGRIYFAGTETATHWSGYMEGAVEAGERAAREILHAMGKIPEDEIWQSEPESVDVPAQPITTTFLERHLPSVPGLLRLIGLTAIFSATALGVLAHKRGLLVRV.

At S2 the chain carries N-acetylserine. The Cytoplasmic segment spans residues 2–489 (SGKCDVVVVG…TFLERHLPSV (488 aa)). The residue at position 52 (K52) is an N6-acetyllysine. C397 carries the post-translational modification S-8alpha-FAD cysteine. Residues 490-516 (PGLLRLIGLTAIFSATALGVLAHKRGL) traverse the membrane as a helical; Anchor for type IV membrane protein segment. Over 517 to 520 (LVRV) the chain is Mitochondrial intermembrane.

Belongs to the flavin monoamine oxidase family. In terms of assembly, monomer, homo- or heterodimer (containing two subunits of similar size). Each subunit contains a covalently bound flavin. Enzymatically active as monomer. The cofactor is FAD.

The protein localises to the mitochondrion outer membrane. It carries out the reaction a secondary aliphatic amine + O2 + H2O = a primary amine + an aldehyde + H2O2. The catalysed reaction is (R)-adrenaline + O2 + H2O = (R)-3,4-dihydroxymandelaldehyde + methylamine + H2O2. It catalyses the reaction a primary methyl amine + O2 + H2O = an aldehyde + H2O2 + NH4(+). The enzyme catalyses benzylamine + O2 + H2O = benzaldehyde + H2O2 + NH4(+). It carries out the reaction dopamine + O2 + H2O = 3,4-dihydroxyphenylacetaldehyde + H2O2 + NH4(+). The catalysed reaction is tyramine + O2 + H2O = (4-hydroxyphenyl)acetaldehyde + H2O2 + NH4(+). It catalyses the reaction (R)-noradrenaline + O2 + H2O = (R)-3,4-dihydroxymandelaldehyde + H2O2 + NH4(+). The enzyme catalyses 2-phenylethylamine + O2 + H2O = 2-phenylacetaldehyde + H2O2 + NH4(+). It carries out the reaction N-acetylputrescine + O2 + H2O = 4-acetamidobutanal + H2O2 + NH4(+). Catalyzes the oxidative deamination of primary and some secondary amines such as neurotransmitters, and exogenous amines including the tertiary amine, neurotoxin 1-methyl-4-phenyl-1,2,3,6-tetrahydropyridine (MPTP), with concomitant reduction of oxygen to hydrogen peroxide and participates in the metabolism of neuroactive and vasoactive amines in the central nervous system and peripheral tissues. Preferentially degrades benzylamine and phenylethylamine. This is Amine oxidase [flavin-containing] B from Canis lupus familiaris (Dog).